Reading from the N-terminus, the 237-residue chain is Germination-specific N-acetylmuramoyl-L-alanine amidase (237 aa).

Residues 1–27 (MRKKLKWLSFLLGFIILLFLFKYQFSN) form the signal peptide. In terms of domain architecture, MurNAc-LAA spans 43-226 (IYLDPGHGGP…VASSIYKGIL (184 aa)).

The protein belongs to the N-acetylmuramoyl-L-alanine amidase 3 family.

The protein localises to the secreted. It catalyses the reaction Hydrolyzes the link between N-acetylmuramoyl residues and L-amino acid residues in certain cell-wall glycopeptides.. Cleaves the peptide side chain from the N-acetylmuramic acid residues in peptidoglycan. This is a step in the formation of muramic delta-lactam residues in spore cortex. This Bacillus subtilis (strain 168) protein is Germination-specific N-acetylmuramoyl-L-alanine amidase (cwlD).